The following is a 288-amino-acid chain: Release factor glutamine methyltransferase (288 aa).

S-adenosyl-L-methionine contacts are provided by aspartate 142 and asparagine 186. Position 186-189 (186-189 (NPPY)) interacts with substrate.

The protein belongs to the protein N5-glutamine methyltransferase family. PrmC subfamily.

It carries out the reaction L-glutaminyl-[peptide chain release factor] + S-adenosyl-L-methionine = N(5)-methyl-L-glutaminyl-[peptide chain release factor] + S-adenosyl-L-homocysteine + H(+). In terms of biological role, methylates the class 1 translation termination release factors RF1/PrfA and RF2/PrfB on the glutamine residue of the universally conserved GGQ motif. In Mycobacterium leprae (strain TN), this protein is Release factor glutamine methyltransferase.